The following is a 782-amino-acid chain: Coiled-coil alpha-helical rod protein 1 (782 aa).

Composition is skewed to basic and acidic residues over residues 62–74 (ERDV…EPGR) and 208–218 (ETRRAGEAKEL). 2 disordered regions span residues 62-82 (ERDV…WGLE) and 177-218 (EQLS…AKEL). Coiled coils occupy residues 82–314 (EGSQ…ELTR), 344–437 (LMVQ…NAVS), and 498–691 (VADV…QQEG).

It is found in the cytoplasm. The protein localises to the nucleus. Functionally, may be a regulator of keratinocyte proliferation or differentiation. The polypeptide is Coiled-coil alpha-helical rod protein 1 (CCHCR1) (Pan troglodytes (Chimpanzee)).